The following is a 406-amino-acid chain: 5-hydroxytryptamine receptor 4 (406 aa).

At 1-19 (MDRLDANVSSNEGFGSVEK) the chain is on the extracellular side. N-linked (GlcNAc...) asparagine glycosylation occurs at asparagine 7. The helical transmembrane segment at 20 to 44 (VVLLTFFAMVILMAILGNLLVMVAV) threads the bilayer. Topologically, residues 45 to 54 (CRDRQLRKIK) are cytoplasmic. The chain crosses the membrane as a helical span at residues 55-78 (TNYFIVSLAFADLLVSVLVNAFGA). Over 79-92 (IELVQDIWFYGEMF) the chain is Extracellular. Residues 93–117 (CLVRTSLDVLLTTASIFHLCCISLD) traverse the membrane as a helical segment. The cysteines at positions 93 and 184 are disulfide-linked. Aspartate 100 serves as a coordination point for serotonin. Residues 118–133 (RYYAICCQPLVYRNKM) lie on the Cytoplasmic side of the membrane. A helical membrane pass occupies residues 134–157 (TPLRIALMLGGCWVIPMFISFLPI). The Extracellular segment spans residues 158-188 (MQGWNNIGIVDVIEKRKFNHNSNSTFCVFMV). Residues 189–212 (NKPYAITCSVVAFYIPFLLMVLAY) form a helical membrane-spanning segment. The Cytoplasmic segment spans residues 213–257 (YRIYVTAKEHAQQIQMLQRAGATSESRPQTADQHSTHRMRTETKA). Residues 258 to 283 (AKTLCVIMGCFCFCWAPFFVTNIVDP) traverse the membrane as a helical segment. Asparagine 279 is a serotonin binding site. Residues 284 to 290 (FIDYTVP) lie on the Extracellular side of the membrane. A helical transmembrane segment spans residues 291-314 (EKVWTAFLWLGYINSGLNPFLYAF). At 315-406 (LNKSFRRAFL…DSCSLKRSQS (92 aa)) the chain is on the cytoplasmic side.

Belongs to the G-protein coupled receptor 1 family. In terms of assembly, interacts (via C-terminus 330-346 AA) with GRK5; this interaction is promoted by 5-HT (serotonin). As to expression, in brain, isoform 5-HT4S is restricted to the striatum. In peripheral tissues, differential expression is also observed in the atrium of the heart where only isoform 5-HT4S is detectable. In terms of tissue distribution, in brain, isoform 5-HT4L is expressed throughout the brain, except in the cerebellum.

Its subcellular location is the cell membrane. The protein localises to the endosome membrane. G-protein coupled receptor for 5-hydroxytryptamine (serotonin), a biogenic hormone that functions as a neurotransmitter, a hormone and a mitogen. Ligand binding causes a conformation change that triggers signaling via guanine nucleotide-binding proteins (G proteins) and modulates the activity of downstream effectors. HTR4 is coupled to G(s) G alpha proteins and mediates activation of adenylate cyclase activity. The sequence is that of 5-hydroxytryptamine receptor 4 (Htr4) from Rattus norvegicus (Rat).